Consider the following 160-residue polypeptide: AP-1 complex subunit sigma-2 (160 aa).

The protein belongs to the adaptor complexes small subunit family. As to quaternary structure, adaptor protein complex 1 (AP-1) is a heterotetramer composed of two large adaptins (gamma-type subunit AP1G1 and beta-type subunit AP1B1), a medium adaptin (mu-type subunit AP1M1 or AP1M2) and a small adaptin (sigma-type subunit AP1S1 or AP1S2 or AP1S3). Binds to MUC1. In terms of tissue distribution, widely expressed.

It localises to the golgi apparatus. The protein localises to the cytoplasmic vesicle membrane. Its subcellular location is the membrane. The protein resides in the clathrin-coated pit. Subunit of clathrin-associated adaptor protein complex 1 that plays a role in protein sorting in the late-Golgi/trans-Golgi network (TGN) and/or endosomes. The AP complexes mediate both the recruitment of clathrin to membranes and the recognition of sorting signals within the cytosolic tails of transmembrane cargo molecules. This is AP-1 complex subunit sigma-2 (Ap1s2) from Mus musculus (Mouse).